We begin with the raw amino-acid sequence, 390 residues long: Transforming growth factor beta-1 proprotein (390 aa).

Residues 1–29 (MPPSGLRLLPLLLPLLRLLVLTPGRPAAG) form the signal peptide. Residues 30–74 (LSTCKTIDMELVKRKRIEAIRGQILSKLRLSSPPSQGEVPPVPLP) are straightjacket domain. The tract at residues 75–271 (EAVLALYNST…ATPLERAQHL (197 aa)) is arm domain. N-linked (GlcNAc...) asparagine glycans are attached at residues N82, N136, and N176. The interval 226–252 (DSKDNTLQVDINGFSSSRRGDLATIHG) is bowtie tail. Residues 244-246 (RGD) carry the Cell attachment site motif. Disulfide bonds link C285–C294, C293–C356, C322–C387, and C326–C389.

It belongs to the TGF-beta family. Homodimer; disulfide-linked. Interacts with the serine proteases, HTRA1 and HTRA3: the interaction with either inhibits TGFB1-mediated signaling and the HTRA protease activity is required for this inhibition. May interact with THSD4; this interaction may lead to sequestration by FBN1 microfibril assembly and attenuation of TGFB signaling. Interacts with CD109, DPT and ASPN. Interacts with EFEMP2. Interacts with TSKU; the interaction contributes to regulation of the hair cycle. Interacts with TGFBR3. As to quaternary structure, homodimer; disulfide-linked. Interacts with transforming growth factor beta-1 (TGF-beta-1) chain; interaction is non-covalent and maintains TGF-beta-1 in a latent state; each latency-associated peptide (LAP) monomer interacts with TGF-beta-1 in the other monomer. Interacts with LTBP1; leading to regulation of TGF-beta-1 activation. Interacts with LRRC32/GARP; leading to regulation of TGF-beta-1 activation on the surface of activated regulatory T-cells (Tregs). Interacts with LRRC33/NRROS; leading to regulation of TGF-beta-1 activation in macrophages and microglia. Interacts (via cell attachment site) with integrins ITGAV and ITGB6 (ITGAV:ITGB6), leading to release of the active TGF-beta-1. Interacts with NREP; the interaction results in a decrease in TGFB1 autoinduction. Interacts with HSP90AB1; inhibits latent TGFB1 activation. In terms of assembly, homodimer; disulfide-linked. Interacts with TGF-beta receptors (TGFBR1 and TGFBR2), leading to signal transduction. Post-translationally, transforming growth factor beta-1 proprotein: The precursor proprotein is cleaved in the Golgi apparatus by FURIN to form Transforming growth factor beta-1 (TGF-beta-1) and Latency-associated peptide (LAP) chains, which remain non-covalently linked, rendering TGF-beta-1 inactive. N-glycosylated. Deglycosylation leads to activation of Transforming growth factor beta-1 (TGF-beta-1); mechanisms triggering deglycosylation-driven activation of TGF-beta-1 are however unclear.

It localises to the secreted. It is found in the extracellular space. Its subcellular location is the extracellular matrix. Functionally, transforming growth factor beta-1 proprotein: Precursor of the Latency-associated peptide (LAP) and Transforming growth factor beta-1 (TGF-beta-1) chains, which constitute the regulatory and active subunit of TGF-beta-1, respectively. In terms of biological role, required to maintain the Transforming growth factor beta-1 (TGF-beta-1) chain in a latent state during storage in extracellular matrix. Associates non-covalently with TGF-beta-1 and regulates its activation via interaction with 'milieu molecules', such as LTBP1, LRRC32/GARP and LRRC33/NRROS, that control activation of TGF-beta-1. Interaction with LRRC33/NRROS regulates activation of TGF-beta-1 in macrophages and microglia. Interaction with LRRC32/GARP controls activation of TGF-beta-1 on the surface of activated regulatory T-cells (Tregs). Interaction with integrins (ITGAV:ITGB6 or ITGAV:ITGB8) results in distortion of the Latency-associated peptide chain and subsequent release of the active TGF-beta-1. Multifunctional protein that regulates the growth and differentiation of various cell types and is involved in various processes, such as normal development, immune function, microglia function and responses to neurodegeneration. Activation into mature form follows different steps: following cleavage of the proprotein in the Golgi apparatus, Latency-associated peptide (LAP) and Transforming growth factor beta-1 (TGF-beta-1) chains remain non-covalently linked rendering TGF-beta-1 inactive during storage in extracellular matrix. At the same time, LAP chain interacts with 'milieu molecules', such as LTBP1, LRRC32/GARP and LRRC33/NRROS that control activation of TGF-beta-1 and maintain it in a latent state during storage in extracellular milieus. TGF-beta-1 is released from LAP by integrins (ITGAV:ITGB6 or ITGAV:ITGB8): integrin-binding to LAP stabilizes an alternative conformation of the LAP bowtie tail and results in distortion of the LAP chain and subsequent release of the active TGF-beta-1. Once activated following release of LAP, TGF-beta-1 acts by binding to TGF-beta receptors (TGFBR1 and TGFBR2), which transduce signal. While expressed by many cells types, TGF-beta-1 only has a very localized range of action within cell environment thanks to fine regulation of its activation by Latency-associated peptide chain (LAP) and 'milieu molecules'. Plays an important role in bone remodeling: acts as a potent stimulator of osteoblastic bone formation, causing chemotaxis, proliferation and differentiation in committed osteoblasts. Can promote either T-helper 17 cells (Th17) or regulatory T-cells (Treg) lineage differentiation in a concentration-dependent manner. At high concentrations, leads to FOXP3-mediated suppression of RORC and down-regulation of IL-17 expression, favoring Treg cell development. At low concentrations in concert with IL-6 and IL-21, leads to expression of the IL-17 and IL-23 receptors, favoring differentiation to Th17 cells. Stimulates sustained production of collagen through the activation of CREB3L1 by regulated intramembrane proteolysis (RIP). Mediates SMAD2/3 activation by inducing its phosphorylation and subsequent translocation to the nucleus. Positively regulates odontoblastic differentiation in dental papilla cells, via promotion of IPO7-mediated translocation of phosphorylated SMAD2 to the nucleus and subsequent transcription of target genes. Can induce epithelial-to-mesenchymal transition (EMT) and cell migration in various cell types. In Canis lupus familiaris (Dog), this protein is Transforming growth factor beta-1 proprotein (TGFB1).